The chain runs to 594 residues: Shugoshin (594 aa).

Residues 38 to 61 (KITDMETKVSELVQENVSLRSRLS) are a coiled coil. Disordered stretches follow at residues 104-178 (SGIH…KSSR), 201-266 (QLPI…TNKN), 342-380 (SKIK…RRTR), and 519-549 (TKQQ…RTKQ). The stretch at 220-240 (EEESQENKHTKEEREDEGKEN) forms a coiled coil. Positions 224 to 239 (QENKHTKEEREDEGKE) are enriched in basic and acidic residues. The span at 252 to 261 (SVTNTGTECS) shows a compositional bias: polar residues. Basic residues predominate over residues 343–355 (KIKHSMKHPRTKL). Residues 357–376 (GGQDDIMPHTDYDKDDEKRE) are compositionally biased toward basic and acidic residues. 2 stretches are compositionally biased toward polar residues: residues 519–532 (TKQQ…SDPN) and 539–549 (NSNVKPTRTKQ).

Belongs to the shugoshin family.

It is found in the nucleus. Its subcellular location is the chromosome. The protein resides in the centromere. Functionally, plays a central role in chromosome cohesion during cell division by preventing premature dissociation of cohesin complex from centromeres after prophase, when most of cohesin complex dissociates from chromosomes arms. The sequence is that of Shugoshin (SGO1) from Kluyveromyces lactis (strain ATCC 8585 / CBS 2359 / DSM 70799 / NBRC 1267 / NRRL Y-1140 / WM37) (Yeast).